Consider the following 481-residue polypeptide: MADATNPPLVYQVPEMRRIRRIHFVGIGGAGMSGIAEVLKNQGYDVSGSDIRDSAVTARLRAMDVDVYIGHRAENTDQADVVVVSSAVAGDNPEVVSARERRVPIVPRAEMLAEIMRYRHGIAVAGTHGKTTTTSLIASVLGEAGLDPTFVIGGKLNSAGTNAQLGGSRYLVAEADESDASFLHLTPVISVVTNIEADHMDTYGGDVEKLKQTFVDFLHNLPFYGVAVMCVDDDYVQEIIPRISRAIITYGIDNPDADYRAENITSDGLKTRFLVRRPGGRPDLQVELKMPGRHNVLNALATIAVATDEGVDDQAICRGLAGFAGVGRRFQVYGEYRTPKAAATLVDDYGHHPTEVEAVIRAAREAWPQRRIVMLYQPHRYTRTRDLYEDFVRVLSEVDGLLLMDVYSAGEPAIPGADGRALCRSIRQRGKVEPVFVEDNREIESLLANVLQDGDLLITQGAGDIGGVAARLAAAGVKASE.

Residue 126 to 132 (GTHGKTT) participates in ATP binding.

The protein belongs to the MurCDEF family.

The protein resides in the cytoplasm. The enzyme catalyses UDP-N-acetyl-alpha-D-muramate + L-alanine + ATP = UDP-N-acetyl-alpha-D-muramoyl-L-alanine + ADP + phosphate + H(+). It functions in the pathway cell wall biogenesis; peptidoglycan biosynthesis. Its function is as follows. Cell wall formation. The sequence is that of UDP-N-acetylmuramate--L-alanine ligase from Marinobacter nauticus (strain ATCC 700491 / DSM 11845 / VT8) (Marinobacter aquaeolei).